Consider the following 91-residue polypeptide: MSDERAPQRSTGPRKKRPFQRRKVCRFCADKQVTIDYKDPRTLRYFISERGKIIPRRISGNCAKHQREITEAIKRARNIALLPIAGSHAAQ.

The tract at residues 1 to 21 is disordered; sequence MSDERAPQRSTGPRKKRPFQR. Residues 12–21 are compositionally biased toward basic residues; sequence GPRKKRPFQR.

It belongs to the bacterial ribosomal protein bS18 family. In terms of assembly, part of the 30S ribosomal subunit. Forms a tight heterodimer with protein bS6.

Its function is as follows. Binds as a heterodimer with protein bS6 to the central domain of the 16S rRNA, where it helps stabilize the platform of the 30S subunit. The sequence is that of Small ribosomal subunit protein bS18 from Geotalea daltonii (strain DSM 22248 / JCM 15807 / FRC-32) (Geobacter daltonii).